We begin with the raw amino-acid sequence, 297 residues long: Tumor necrosis factor receptor superfamily member 27 (297 aa).

The Extracellular segment spans residues 1 to 138 (MDCQENEYRD…AHTVPPREAT (138 aa)). 3 TNFR-Cys repeats span residues 2-41 (DCQENEYRDQWGRCVTCQQCGPGQELSKDCGYGEGGDAHC), 43-83 (VCPP…NAIC), and 85-118 (DCLPRFYRKTRIGGLQDQECIPCTKQTPSSEVQC). Disulfide bonds link C3–C15, C18–C31, C21–C41, C44–C58, C61–C75, C64–C83, C86–C104, and C107–C118. N-linked (GlcNAc...) asparagine glycans are attached at residues N74 and N77. The chain crosses the membrane as a helical; Signal-anchor for type III membrane protein span at residues 139–159 (LVALVGSLLVVFALAFLGLFF). At 160 to 297 (LYCKQIFNRH…LYVPFEVPSL (138 aa)) the chain is on the cytoplasmic side.

In terms of assembly, associates with TRAF1, TRAF3 and TRAF6.

It is found in the membrane. Functionally, receptor for EDA isoform A2, but not for EDA isoform A1. Mediates the activation of the NF-kappa-B and JNK pathways. Activation seems to be mediated by binding to TRAF3 and TRAF6. The polypeptide is Tumor necrosis factor receptor superfamily member 27 (Eda2r) (Mus musculus (Mouse)).